Consider the following 92-residue polypeptide: Alpha-elapitoxin-Lh2a (92 aa).

An N-terminal signal peptide occupies residues 1–21; that stretch reads MKTLLLTLVVVTIVCLDLGDS. Cystine bridges form between C24–C41, C34–C62, C47–C51, C66–C77, and C78–C83.

It belongs to the three-finger toxin family. Long-chain subfamily. Type II alpha-neurotoxin sub-subfamily. In terms of tissue distribution, expressed by the venom gland.

The protein resides in the secreted. Its function is as follows. Binds with high affinity to muscular (alpha-1/CHRNA1) and neuronal (alpha-7/CHRNA7) nicotinic acetylcholine receptor (nAChR) and inhibits acetylcholine from binding to the receptor, thereby impairing neuromuscular and neuronal transmission. This Hydrophis hardwickii (Hardwick's spine-bellied seasnake) protein is Alpha-elapitoxin-Lh2a.